A 116-amino-acid chain; its full sequence is MSNIIKQLEQEQLKQNVPSFRPGDTLEVKVWVVEGSKRRLQAFEGVVIAIRNRGLHSAFTLRKVSNGVGVERVFQTHSPAVDSIAVKRKGAVRKAKLYYLRERSGKSARIKERLGA.

It belongs to the bacterial ribosomal protein bL19 family.

Functionally, this protein is located at the 30S-50S ribosomal subunit interface and may play a role in the structure and function of the aminoacyl-tRNA binding site. The sequence is that of Large ribosomal subunit protein bL19 from Haemophilus influenzae (strain 86-028NP).